The sequence spans 455 residues: Bifunctional protein GlmU (455 aa).

Residues 1–226 (MGLSVVILAA…EFEILGVNDR (226 aa)) form a pyrophosphorylase region. UDP-N-acetyl-alpha-D-glucosamine is bound by residues 8-11 (LAAG), Lys-22, Gln-73, 78-79 (GT), 99-101 (YGD), Gly-136, Glu-151, Asn-166, and Asn-224. Asp-101 contacts Mg(2+). Asn-224 is a Mg(2+) binding site. The segment at 227–247 (TQLASLERVWQRNVAEKIMAK) is linker. The interval 248-455 (GVSIADPNRF…WQRSVKKTDK (208 aa)) is N-acetyltransferase. UDP-N-acetyl-alpha-D-glucosamine-binding residues include Arg-330 and Lys-348. Catalysis depends on His-360, which acts as the Proton acceptor. UDP-N-acetyl-alpha-D-glucosamine contacts are provided by Tyr-363 and Asn-374. Acetyl-CoA is bound by residues Ala-377, 383–384 (NY), Ser-402, Ala-420, and Arg-437.

It in the N-terminal section; belongs to the N-acetylglucosamine-1-phosphate uridyltransferase family. In the C-terminal section; belongs to the transferase hexapeptide repeat family. Homotrimer. Requires Mg(2+) as cofactor.

Its subcellular location is the cytoplasm. It carries out the reaction alpha-D-glucosamine 1-phosphate + acetyl-CoA = N-acetyl-alpha-D-glucosamine 1-phosphate + CoA + H(+). The catalysed reaction is N-acetyl-alpha-D-glucosamine 1-phosphate + UTP + H(+) = UDP-N-acetyl-alpha-D-glucosamine + diphosphate. It participates in nucleotide-sugar biosynthesis; UDP-N-acetyl-alpha-D-glucosamine biosynthesis; N-acetyl-alpha-D-glucosamine 1-phosphate from alpha-D-glucosamine 6-phosphate (route II): step 2/2. It functions in the pathway nucleotide-sugar biosynthesis; UDP-N-acetyl-alpha-D-glucosamine biosynthesis; UDP-N-acetyl-alpha-D-glucosamine from N-acetyl-alpha-D-glucosamine 1-phosphate: step 1/1. Its pathway is bacterial outer membrane biogenesis; LPS lipid A biosynthesis. Functionally, catalyzes the last two sequential reactions in the de novo biosynthetic pathway for UDP-N-acetylglucosamine (UDP-GlcNAc). The C-terminal domain catalyzes the transfer of acetyl group from acetyl coenzyme A to glucosamine-1-phosphate (GlcN-1-P) to produce N-acetylglucosamine-1-phosphate (GlcNAc-1-P), which is converted into UDP-GlcNAc by the transfer of uridine 5-monophosphate (from uridine 5-triphosphate), a reaction catalyzed by the N-terminal domain. The protein is Bifunctional protein GlmU of Francisella tularensis subsp. holarctica (strain OSU18).